Reading from the N-terminus, the 309-residue chain is Ribonuclease Z (309 aa).

Zn(2+)-binding residues include histidine 63, histidine 65, aspartate 67, histidine 68, histidine 143, aspartate 213, and histidine 271. The Proton acceptor role is filled by aspartate 67.

The protein belongs to the RNase Z family. Homodimer. It depends on Zn(2+) as a cofactor.

It catalyses the reaction Endonucleolytic cleavage of RNA, removing extra 3' nucleotides from tRNA precursor, generating 3' termini of tRNAs. A 3'-hydroxy group is left at the tRNA terminus and a 5'-phosphoryl group is left at the trailer molecule.. Its function is as follows. Zinc phosphodiesterase, which displays some tRNA 3'-processing endonuclease activity. Probably involved in tRNA maturation, by removing a 3'-trailer from precursor tRNA. The protein is Ribonuclease Z of Phocaeicola vulgatus (strain ATCC 8482 / DSM 1447 / JCM 5826 / CCUG 4940 / NBRC 14291 / NCTC 11154) (Bacteroides vulgatus).